We begin with the raw amino-acid sequence, 280 residues long: Phosphonates import ATP-binding protein PhnC 1 (280 aa).

One can recognise an ABC transporter domain in the interval 2–246 (LRIENLDKRY…VLTRIYGEED (245 aa)). 35-42 (GPSGAGKS) is a binding site for ATP. The interval 247-266 (WSKTSDEDADSVDAPPRAAD) is disordered.

The protein belongs to the ABC transporter superfamily. Phosphonates importer (TC 3.A.1.9.1) family. As to quaternary structure, the complex is composed of two ATP-binding proteins (PhnC), two transmembrane proteins (PhnE) and a solute-binding protein (PhnD).

It is found in the cell inner membrane. The catalysed reaction is phosphonate(out) + ATP + H2O = phosphonate(in) + ADP + phosphate + H(+). Functionally, part of the ABC transporter complex PhnCDE involved in phosphonates import. Responsible for energy coupling to the transport system. This Rhodopseudomonas palustris (strain HaA2) protein is Phosphonates import ATP-binding protein PhnC 1.